Reading from the N-terminus, the 394-residue chain is tRNA-specific 2-thiouridylase MnmA (394 aa).

ATP is bound by residues 13-20 and Met-39; that span reads GLSGGVDS. The tract at residues 99–101 is interaction with target base in tRNA; the sequence is NPD. Residue Cys-104 is the Nucleophile of the active site. A disulfide bridge links Cys-104 with Cys-202. Gly-128 is a binding site for ATP. The interaction with tRNA stretch occupies residues 152 to 154; sequence KDQ. Cys-202 serves as the catalytic Cysteine persulfide intermediate. An interaction with tRNA region spans residues 329 to 330; the sequence is RY.

The protein belongs to the MnmA/TRMU family.

The protein localises to the cytoplasm. It carries out the reaction S-sulfanyl-L-cysteinyl-[protein] + uridine(34) in tRNA + AH2 + ATP = 2-thiouridine(34) in tRNA + L-cysteinyl-[protein] + A + AMP + diphosphate + H(+). Catalyzes the 2-thiolation of uridine at the wobble position (U34) of tRNA, leading to the formation of s(2)U34. The protein is tRNA-specific 2-thiouridylase MnmA of Polaromonas naphthalenivorans (strain CJ2).